Reading from the N-terminus, the 364-residue chain is 3-isopropylmalate dehydrogenase (364 aa).

76-89 (GPKWEKLPPNEQPE) is a binding site for NAD(+). Residues Arg-97, Arg-107, Arg-136, and Asp-225 each coordinate substrate. Mg(2+) is bound by residues Asp-225, Asp-249, and Asp-253. 283–295 (GSAPDIAGKGIAN) provides a ligand contact to NAD(+).

Belongs to the isocitrate and isopropylmalate dehydrogenases family. LeuB type 1 subfamily. As to quaternary structure, homodimer. Requires Mg(2+) as cofactor. Mn(2+) is required as a cofactor.

It is found in the cytoplasm. The catalysed reaction is (2R,3S)-3-isopropylmalate + NAD(+) = 4-methyl-2-oxopentanoate + CO2 + NADH. It functions in the pathway amino-acid biosynthesis; L-leucine biosynthesis; L-leucine from 3-methyl-2-oxobutanoate: step 3/4. Its function is as follows. Catalyzes the oxidation of 3-carboxy-2-hydroxy-4-methylpentanoate (3-isopropylmalate) to 3-carboxy-4-methyl-2-oxopentanoate. The product decarboxylates to 4-methyl-2 oxopentanoate. The protein is 3-isopropylmalate dehydrogenase of Shewanella oneidensis (strain ATCC 700550 / JCM 31522 / CIP 106686 / LMG 19005 / NCIMB 14063 / MR-1).